The chain runs to 184 residues: Ribosome-recycling factor (184 aa).

A disordered region spans residues 141–165 (DEKNGDITEDDLRSQTDDVQKATDN).

Belongs to the RRF family.

Its subcellular location is the cytoplasm. Responsible for the release of ribosomes from messenger RNA at the termination of protein biosynthesis. May increase the efficiency of translation by recycling ribosomes from one round of translation to another. The polypeptide is Ribosome-recycling factor (Staphylococcus epidermidis (strain ATCC 35984 / DSM 28319 / BCRC 17069 / CCUG 31568 / BM 3577 / RP62A)).